Here is a 197-residue protein sequence, read N- to C-terminus: Holliday junction branch migration complex subunit RuvA (197 aa).

The tract at residues 1-64 (MIARLAGKVA…QDAIELYGFA (64 aa)) is domain I. Residues 65-141 (SEDEEAVFRA…LALLARAAGP (77 aa)) are domain II. A flexible linker region spans residues 141 to 145 (PARAK). The domain III stretch occupies residues 146-197 (PGAGVVEQLRQALVNLGYKPPQADAAADALRDEAEGKKLDELLREALKRLRG).

It belongs to the RuvA family. In terms of assembly, homotetramer. Forms an RuvA(8)-RuvB(12)-Holliday junction (HJ) complex. HJ DNA is sandwiched between 2 RuvA tetramers; dsDNA enters through RuvA and exits via RuvB. An RuvB hexamer assembles on each DNA strand where it exits the tetramer. Each RuvB hexamer is contacted by two RuvA subunits (via domain III) on 2 adjacent RuvB subunits; this complex drives branch migration. In the full resolvosome a probable DNA-RuvA(4)-RuvB(12)-RuvC(2) complex forms which resolves the HJ.

The protein localises to the cytoplasm. In terms of biological role, the RuvA-RuvB-RuvC complex processes Holliday junction (HJ) DNA during genetic recombination and DNA repair, while the RuvA-RuvB complex plays an important role in the rescue of blocked DNA replication forks via replication fork reversal (RFR). RuvA specifically binds to HJ cruciform DNA, conferring on it an open structure. The RuvB hexamer acts as an ATP-dependent pump, pulling dsDNA into and through the RuvAB complex. HJ branch migration allows RuvC to scan DNA until it finds its consensus sequence, where it cleaves and resolves the cruciform DNA. This chain is Holliday junction branch migration complex subunit RuvA, found in Anaeromyxobacter sp. (strain Fw109-5).